We begin with the raw amino-acid sequence, 156 residues long: ATP synthase subunit b (156 aa).

A helical membrane pass occupies residues 7 to 27 (LFAQLVVFFILAWFTMKFVWP).

The protein belongs to the ATPase B chain family. F-type ATPases have 2 components, F(1) - the catalytic core - and F(0) - the membrane proton channel. F(1) has five subunits: alpha(3), beta(3), gamma(1), delta(1), epsilon(1). F(0) has four main subunits: a(1), b(2) and c(10-14). The alpha and beta chains form an alternating ring which encloses part of the gamma chain. F(1) is attached to F(0) by a central stalk formed by the gamma and epsilon chains, while a peripheral stalk is formed by the delta and b chains.

Its subcellular location is the cell inner membrane. In terms of biological role, f(1)F(0) ATP synthase produces ATP from ADP in the presence of a proton or sodium gradient. F-type ATPases consist of two structural domains, F(1) containing the extramembraneous catalytic core and F(0) containing the membrane proton channel, linked together by a central stalk and a peripheral stalk. During catalysis, ATP synthesis in the catalytic domain of F(1) is coupled via a rotary mechanism of the central stalk subunits to proton translocation. Component of the F(0) channel, it forms part of the peripheral stalk, linking F(1) to F(0). This chain is ATP synthase subunit b, found in Methylibium petroleiphilum (strain ATCC BAA-1232 / LMG 22953 / PM1).